The following is a 342-amino-acid chain: GTPase Obg (342 aa).

An Obg domain is found at 1–159; sequence MKFIDEAKIY…RWIRLELKLL (159 aa). Residues 160 to 332 enclose the OBG-type G domain; it reads ADVGIIGLPN…LLYKIGEALK (173 aa). GTP contacts are provided by residues 166–173, 191–195, 214–217, 284–287, and 313–315; these read GLPNVGKS, FTTLT, DIPG, NKTD, and SAA. Mg(2+) is bound by residues Ser-173 and Thr-193.

The protein belongs to the TRAFAC class OBG-HflX-like GTPase superfamily. OBG GTPase family. Monomer. Mg(2+) serves as cofactor.

It is found in the cytoplasm. Functionally, an essential GTPase which binds GTP, GDP and possibly (p)ppGpp with moderate affinity, with high nucleotide exchange rates and a fairly low GTP hydrolysis rate. Plays a role in control of the cell cycle, stress response, ribosome biogenesis and in those bacteria that undergo differentiation, in morphogenesis control. This chain is GTPase Obg, found in Syntrophus aciditrophicus (strain SB).